A 173-amino-acid polypeptide reads, in one-letter code: Alpha-crystallin A chain (173 aa).

The residue at position 1 (Met1) is an N-acetylmethionine. The sHSP domain occupies 52–164; the sequence is LFRSVLESGI…SDRPIPVARE (113 aa). Positions 100, 102, 107, and 154 each coordinate Zn(2+). Residues 152-173 are disordered; sequence TIHSDRPIPVAREEKPTSAPSS. Positions 153 to 167 are enriched in basic and acidic residues; sequence IHSDRPIPVAREEKP.

Belongs to the small heat shock protein (HSP20) family. Heteropolymer composed of three CRYAA and one CRYAB subunits. Inter-subunit bridging via zinc ions enhances stability, which is crucial as there is no protein turn over in the lens. Can also form homodimers and homotetramers (dimers of dimers) which serve as the building blocks of homooligomers. Within homooligomers, the zinc-binding motif is created from residues of 3 different molecules. His-100 and Glu-102 from one molecule are ligands of the zinc ion, and His-107 and His-154 residues from additional molecules complete the site with tetrahedral coordination geometry.

It is found in the cytoplasm. It localises to the nucleus. In terms of biological role, contributes to the transparency and refractive index of the lens. May act as a chaperone, preventing aggregation of various proteins under a wide range of stress conditions. This Alligator mississippiensis (American alligator) protein is Alpha-crystallin A chain (CRYAA).